A 266-amino-acid polypeptide reads, in one-letter code: uncharacterized protein (266 aa).

Residues 112 to 261 form the TIR domain; it reads LEKKIFISHS…KKWERIKAKF (150 aa). E192 is a catalytic residue.

The enzyme catalyses NAD(+) + H2O = ADP-D-ribose + nicotinamide + H(+). This is an uncharacterized protein from Bacillus subtilis (strain 168).